The following is a 357-amino-acid chain: MTRDSPDSNDSYKHINKNTTQKTSFDRNSFDYIVRSGLAGGISGSCAKTLIAPLDRIKILFQTSNPHYTKYTGSLIGLVEAAKHIWINDGVRGFFQGHSATLLRIFPYAAVKFVAYEQIRNTLIPSKEFESHWRRLVSGSLAGLCSVFITYPLDLVRVRLAYETEHKRVKLGRIIKKIYKEPASATLIKNDYIPNWFCHWCNFYRGYVPTVLGMIPYAGVSFFAHDLLHDVLKSPFFAPYSVLELSEDDELERVQKKQRRPLRTWAELISGGLAGMASQTAAYPFEIIRRRLQVSALSPKTMYDHKFQSISEIAHIIFKERGVRGFFVGLSIGYIKVTPMVACSFFVYERMKWNFGI.

Helical transmembrane passes span 31–47, 103–119, 136–153, 208–228, 269–285, and 325–347; these read DYIV…GSCA, LRIF…YEQI, LVSG…TYPL, VPTV…HDLL, ISGG…AYPF, and GFFV…SFFV. Solcar repeat units lie at residues 31-122, 130-231, and 262-354; these read DYIV…IRNT, ESHW…LHDV, and LRTW…MKWN.

This sequence belongs to the mitochondrial carrier (TC 2.A.29) family.

It localises to the mitochondrion inner membrane. Functionally, required for the accumulation of coenzyme A in the mitochondrial matrix. The sequence is that of Mitochondrial carrier protein LEU5 (LEU5) from Saccharomyces cerevisiae (strain ATCC 204508 / S288c) (Baker's yeast).